A 150-amino-acid polypeptide reads, in one-letter code: FAD synthase (150 aa).

Residues 8 to 9, 13 to 16, D95, and H122 each bind ATP; these read AF and HPGH.

Belongs to the archaeal FAD synthase family. Homodimer. The cofactor is a divalent metal cation.

It catalyses the reaction FMN + ATP + H(+) = FAD + diphosphate. It functions in the pathway cofactor biosynthesis; FAD biosynthesis; FAD from FMN: step 1/1. Its function is as follows. Catalyzes the transfer of the AMP portion of ATP to flavin mononucleotide (FMN) to produce flavin adenine dinucleotide (FAD) coenzyme. The protein is FAD synthase of Methanobrevibacter ruminantium (strain ATCC 35063 / DSM 1093 / JCM 13430 / OCM 146 / M1) (Methanobacterium ruminantium).